We begin with the raw amino-acid sequence, 111 residues long: Photosystem II reaction center Psb28 protein (111 aa).

This sequence belongs to the Psb28 family. In terms of assembly, part of the photosystem II complex.

It is found in the cellular thylakoid membrane. This is Photosystem II reaction center Psb28 protein from Nostoc sp. (strain PCC 7120 / SAG 25.82 / UTEX 2576).